The following is a 256-amino-acid chain: Transmembrane protein 74B (256 aa).

Residues 1 to 111 are disordered; it reads MPPAQGYEFA…LSLHSEEGPA (111 aa). A compositionally biased stretch (low complexity) spans 80–96; sequence RLGSSPSPPGGVSSLPR. Over residues 97 to 108 the composition is skewed to basic and acidic residues; sequence SQRDDLSLHSEE. The next 2 membrane-spanning stretches (helical) occupy residues 123 to 143 and 177 to 197; these read FVSALVFLVSGILLVVTAYAI and IIAGLGLLTVGGMLLSVLLMV.

This sequence belongs to the TMEM74 family.

The protein localises to the membrane. The polypeptide is Transmembrane protein 74B (TMEM74B) (Homo sapiens (Human)).